A 161-amino-acid polypeptide reads, in one-letter code: Large ribosomal subunit protein uL30m (161 aa).

A mitochondrion-targeting transit peptide spans 1–34 (MAGILRLVVQRPPGGLQTVTKGVESLIGTDWIRH).

It belongs to the universal ribosomal protein uL30 family. In terms of assembly, component of the mitochondrial ribosome large subunit (39S) which comprises a 16S rRNA and about 50 distinct proteins.

The protein localises to the mitochondrion. This Macaca fascicularis (Crab-eating macaque) protein is Large ribosomal subunit protein uL30m (MRPL30).